We begin with the raw amino-acid sequence, 436 residues long: Enolase (436 aa).

Q167 lines the (2R)-2-phosphoglycerate pocket. E209 acts as the Proton donor in catalysis. Mg(2+) is bound by residues D246, E291, and D318. Residues K343, R372, S373, and K394 each coordinate (2R)-2-phosphoglycerate. The active-site Proton acceptor is K343.

The protein belongs to the enolase family. Component of the RNA degradosome, a multiprotein complex involved in RNA processing and mRNA degradation. Mg(2+) is required as a cofactor.

Its subcellular location is the cytoplasm. It is found in the secreted. The protein localises to the cell surface. It catalyses the reaction (2R)-2-phosphoglycerate = phosphoenolpyruvate + H2O. The protein operates within carbohydrate degradation; glycolysis; pyruvate from D-glyceraldehyde 3-phosphate: step 4/5. Catalyzes the reversible conversion of 2-phosphoglycerate (2-PG) into phosphoenolpyruvate (PEP). It is essential for the degradation of carbohydrates via glycolysis. This Haemophilus influenzae (strain PittGG) protein is Enolase.